Reading from the N-terminus, the 823-residue chain is Apoptosis-resistant E3 ubiquitin protein ligase 1 (823 aa).

The Filamin repeat unit spans residues 52–158 (GNYLDPRSCK…VAYSPYYKIF (107 aa)). Residues 315–345 (PPMHMTSSQRRPSTAVDEEDEDSPSECHTPE) form a disordered region. The segment at 483-789 (SISDWSKNFE…THSTLPTAHT (307 aa)) is interaction with SOCS2. An HECT domain is found at 483–823 (SISDWSKNFE…SEGCEGFGML (341 aa)). Cys-790 acts as the Glycyl thioester intermediate in catalysis.

As to quaternary structure, interacts with SOCS2. Interacts (via HECT domain) with HTRA2, DIABLO/SMAC and SEPTIN4; in the cytoplasm following induction of apoptosis. Autoubiquitinated in vitro in the presence of E2 enzyme UBE2D1/UBCH5A.

It carries out the reaction S-ubiquitinyl-[E2 ubiquitin-conjugating enzyme]-L-cysteine + [acceptor protein]-L-lysine = [E2 ubiquitin-conjugating enzyme]-L-cysteine + N(6)-ubiquitinyl-[acceptor protein]-L-lysine.. The protein operates within protein modification; protein ubiquitination. E3 ubiquitin-protein ligase that catalyzes 'Lys-11'- or 'Lys-33'-linked polyubiquitin chains, with some preference for 'Lys-33' linkages. E3 ubiquitin-protein ligases accept ubiquitin from an E2 ubiquitin-conjugating enzyme in the form of a thioester and then directly transfers the ubiquitin to targeted substrates. Ubiquitinates SEPTIN4, DIABLO/SMAC and HTRA2 in vitro. Modulates pulmonary inflammation by targeting SOCS2 for ubiquitination and subsequent degradation by the proteasome. The chain is Apoptosis-resistant E3 ubiquitin protein ligase 1 from Homo sapiens (Human).